A 188-amino-acid polypeptide reads, in one-letter code: Elongation factor P (188 aa).

The protein belongs to the elongation factor P family.

The protein resides in the cytoplasm. It functions in the pathway protein biosynthesis; polypeptide chain elongation. In terms of biological role, involved in peptide bond synthesis. Stimulates efficient translation and peptide-bond synthesis on native or reconstituted 70S ribosomes in vitro. Probably functions indirectly by altering the affinity of the ribosome for aminoacyl-tRNA, thus increasing their reactivity as acceptors for peptidyl transferase. In Nitrobacter winogradskyi (strain ATCC 25391 / DSM 10237 / CIP 104748 / NCIMB 11846 / Nb-255), this protein is Elongation factor P.